The sequence spans 71 residues: DNA-directed RNA polymerase subunit epsilon (71 aa).

It belongs to the RNA polymerase subunit epsilon family. Monomer. RNAP is composed of a core of 2 alpha, a beta and a beta' subunit. The core is associated with a delta subunit, and at least one of epsilon or omega. When a sigma factor is associated with the core the holoenzyme is formed, which can initiate transcription.

It catalyses the reaction RNA(n) + a ribonucleoside 5'-triphosphate = RNA(n+1) + diphosphate. Its function is as follows. A non-essential component of RNA polymerase (RNAP). Has a similar structure to bacteriophage T7 protein Gp2 (AC P03704), which is known to bind to RNAP in the DNA binding-cleft. Unlike Gp2 however, this protein does not inhibit transcription initiation. In Geobacillus stearothermophilus (strain DSM 13240 / CIP 106956 / 10), this protein is DNA-directed RNA polymerase subunit epsilon.